Here is a 357-residue protein sequence, read N- to C-terminus: Peptide chain release factor 1 (357 aa).

Glutamine 234 is modified (N5-methylglutamine). Residues 284–307 (KKQEQRSNDRKQQVGSGDRSERIR) are compositionally biased toward basic and acidic residues. The interval 284-313 (KKQEQRSNDRKQQVGSGDRSERIRTYNFPQ) is disordered.

It belongs to the prokaryotic/mitochondrial release factor family. In terms of processing, methylated by PrmC. Methylation increases the termination efficiency of RF1.

The protein resides in the cytoplasm. Functionally, peptide chain release factor 1 directs the termination of translation in response to the peptide chain termination codons UAG and UAA. In Borrelia hermsii (strain HS1 / DAH), this protein is Peptide chain release factor 1.